A 249-amino-acid polypeptide reads, in one-letter code: Receptor-transporting protein 4 (249 aa).

Residues 1 to 227 (MLFPDDFSTW…QGCREPPQRE (227 aa)) are Cytoplasmic-facing. Residues 50-162 (TVLGRFQCSR…DTRNCEACSL (113 aa)) form a 3CxxC-type zinc finger. Positions 173–208 (KVKPPRSPSPLPKSSSPSKSCPPPPQTRNTDFGNKT) are disordered. A compositionally biased stretch (polar residues) spans 199–208 (TRNTDFGNKT). A helical transmembrane segment spans residues 228–248 (IEPPLFLFLSIAAFALFSLFT).

Belongs to the TMEM7 family. As to quaternary structure, interacts with TASR16. Interacts with OPRD1 and OPRM1; the interaction promotes cell surface localization of the OPDR1-OPRM1 heterodimer. Expressed at low levels in olfactory neurons. Upon viral infection, highly expressed in brain and different cells of nervous tissue.

Its subcellular location is the membrane. The protein localises to the cytoplasm. Its function is as follows. Chaperone protein that facilitates the trafficking and functional cell surface expression of some G-protein coupled receptors (GPCRs). Promotes functional expression of the bitter taste receptor TAS2R16. Also promotes functional expression of the opioid receptor heterodimer OPRD1-OPRM1. In addition, acts as a potent IFN-inducible suppressor of pathogens including lyssavirus rabies, influenza A or yellow fever virus. Mechanistically, associates with the viral replicase, binds viral RNA, and thereby suppresses viral genome amplification that replicates at the endoplasmic reticulum. In addition, restores antiviral signaling by interacting with and sequestering influenza virus protein NS1. In Mus musculus (Mouse), this protein is Receptor-transporting protein 4 (Rtp4).